A 784-amino-acid chain; its full sequence is DNA repair and recombination protein RAD54-like (784 aa).

Residues 2 to 9 form a required for chromatin remodeling, strand pairing activities and coupling of ATPase activity region; the sequence is RRSLAPSQ. Phosphothreonine is present on T22. Residues 169–344 form the Helicase ATP-binding domain; it reads EGKKGNFNGC…FSLVNFVNPE (176 aa). Residue 182–189 coordinates ATP; the sequence is DEMGLGKT. Residues 295 to 298 carry the DEGH box motif; that stretch reads DEGH. The 158-residue stretch at 501 to 658 folds into the Helicase C-terminal domain; that stretch reads LLDFMLATIR…NNESAEKHFT (158 aa). Residues 742-784 are disordered; the sequence is QAIKESEETKQEAEDTSIPAKSKRKRSTTPESDDCNDEDFKGF. Over residues 745–754 the composition is skewed to basic and acidic residues; that stretch reads KESEETKQEA.

The protein belongs to the SNF2/RAD54 helicase family. As to quaternary structure, interacts (via N-terminus) with spn-A/Rad51.

The protein localises to the nucleus. Its function is as follows. Involved in mitotic DNA repair and meiotic recombination. Functions in the recombinational DNA repair pathway. Essential for interhomolog gene conversion (GC), but may have a less important role in intersister GC than spn-A/Rad51. In the presence of DNA, spn-A/Rad51 enhances the ATPase activity of okr/Rad54. In Drosophila willistoni (Fruit fly), this protein is DNA repair and recombination protein RAD54-like.